Consider the following 544-residue polypeptide: CTP synthase (544 aa).

Residues 1-265 are amidoligase domain; it reads MTKFIFVTGG…DNIITEQLQL (265 aa). Ser13 is a binding site for CTP. Position 13 (Ser13) interacts with UTP. Residues 14–19 and Asp71 each bind ATP; that span reads SLGKGI. Residues Asp71 and Glu139 each coordinate Mg(2+). Residues 146–148, 186–191, and Lys222 contribute to the CTP site; these read DIE and KTKPTQ. Residues 186–191 and Lys222 contribute to the UTP site; that span reads KTKPTQ. A Glutamine amidotransferase type-1 domain is found at 290–544; the sequence is KIAMVGKYVD…VKAALNNKKA (255 aa). An L-glutamine-binding site is contributed by Gly353. The Nucleophile; for glutamine hydrolysis role is filled by Cys380. Residues 381-384, Glu404, and Arg471 each bind L-glutamine; that span reads LGMQ. Residues His517 and Glu519 contribute to the active site.

The protein belongs to the CTP synthase family. Homotetramer.

The catalysed reaction is UTP + L-glutamine + ATP + H2O = CTP + L-glutamate + ADP + phosphate + 2 H(+). It carries out the reaction L-glutamine + H2O = L-glutamate + NH4(+). The enzyme catalyses UTP + NH4(+) + ATP = CTP + ADP + phosphate + 2 H(+). It participates in pyrimidine metabolism; CTP biosynthesis via de novo pathway; CTP from UDP: step 2/2. Allosterically activated by GTP, when glutamine is the substrate; GTP has no effect on the reaction when ammonia is the substrate. The allosteric effector GTP functions by stabilizing the protein conformation that binds the tetrahedral intermediate(s) formed during glutamine hydrolysis. Inhibited by the product CTP, via allosteric rather than competitive inhibition. Functionally, catalyzes the ATP-dependent amination of UTP to CTP with either L-glutamine or ammonia as the source of nitrogen. Regulates intracellular CTP levels through interactions with the four ribonucleotide triphosphates. This is CTP synthase from Neisseria meningitidis serogroup A / serotype 4A (strain DSM 15465 / Z2491).